The sequence spans 204 residues: MDQNANQPRQERPSVRLEKLQHWARHKQSGRLLVLAVSQVWLAIAMVPFTISVSCLTSACHLVTALPLWPGASGLLTGIITLELRRAPCIWKVRAMMISNTFNLILGFVAVVIEVMKTALGTASMDSSQSTGLLVLELSAEAFTLAGVLVSTYALFLLSQRKPGYFKRSRLQYRELQEGLSEMEEVSGLENGPVVASTGNRTDE.

A run of 4 helical transmembrane segments spans residues 33 to 53 (LVLAVSQVWLAIAMVPFTISV), 62 to 82 (LVTALPLWPGASGLLTGIITL), 96 to 116 (MMISNTFNLILGFVAVVIEVM), and 138 to 158 (LSAEAFTLAGVLVSTYALFLL). Residues 184 to 204 (EEVSGLENGPVVASTGNRTDE) are disordered.

It localises to the membrane. The chain is Transmembrane protein 253 (Tmem253) from Mus musculus (Mouse).